A 483-amino-acid chain; its full sequence is Alginate biosynthesis protein AlgA (483 aa).

This sequence belongs to the mannose-6-phosphate isomerase type 2 family. In terms of assembly, monomer. It depends on Co(2+) as a cofactor.

The enzyme catalyses D-mannose 6-phosphate = D-fructose 6-phosphate. It carries out the reaction alpha-D-mannose 1-phosphate + GTP + H(+) = GDP-alpha-D-mannose + diphosphate. It functions in the pathway nucleotide-sugar biosynthesis; GDP-alpha-D-mannose biosynthesis; GDP-alpha-D-mannose from alpha-D-mannose 1-phosphate (GTP route): step 1/1. Its pathway is nucleotide-sugar biosynthesis; GDP-alpha-D-mannose biosynthesis; alpha-D-mannose 1-phosphate from D-fructose 6-phosphate: step 1/2. Produces a precursor for alginate polymerization. The alginate layer provides a protective barrier against host immune defenses and antibiotics. The chain is Alginate biosynthesis protein AlgA (algA) from Pseudomonas syringae pv. tomato (strain ATCC BAA-871 / DC3000).